Here is an 899-residue protein sequence, read N- to C-terminus: Valine--tRNA ligase (899 aa).

The short motif at 58–68 (PNVTGVLHIGH) is the 'HIGH' region element. The 'KMSKS' region signature appears at 544–548 (KMSKS). Lys547 provides a ligand contact to ATP. Residues 836–898 (GTRLHNQRQK…NAELIALGLQ (63 aa)) adopt a coiled-coil conformation.

Belongs to the class-I aminoacyl-tRNA synthetase family. ValS type 1 subfamily. As to quaternary structure, monomer.

It localises to the cytoplasm. It carries out the reaction tRNA(Val) + L-valine + ATP = L-valyl-tRNA(Val) + AMP + diphosphate. Functionally, catalyzes the attachment of valine to tRNA(Val). As ValRS can inadvertently accommodate and process structurally similar amino acids such as threonine, to avoid such errors, it has a 'posttransfer' editing activity that hydrolyzes mischarged Thr-tRNA(Val) in a tRNA-dependent manner. The sequence is that of Valine--tRNA ligase from Helicobacter hepaticus (strain ATCC 51449 / 3B1).